A 192-amino-acid chain; its full sequence is dTTP/UTP pyrophosphatase (192 aa).

Asp-65 (proton acceptor) is an active-site residue.

The protein belongs to the Maf family. YhdE subfamily. The cofactor is a divalent metal cation.

Its subcellular location is the cytoplasm. It carries out the reaction dTTP + H2O = dTMP + diphosphate + H(+). It catalyses the reaction UTP + H2O = UMP + diphosphate + H(+). In terms of biological role, nucleoside triphosphate pyrophosphatase that hydrolyzes dTTP and UTP. May have a dual role in cell division arrest and in preventing the incorporation of modified nucleotides into cellular nucleic acids. The polypeptide is dTTP/UTP pyrophosphatase (Fusobacterium nucleatum subsp. nucleatum (strain ATCC 25586 / DSM 15643 / BCRC 10681 / CIP 101130 / JCM 8532 / KCTC 2640 / LMG 13131 / VPI 4355)).